Consider the following 431-residue polypeptide: Glutamate-1-semialdehyde 2,1-aminomutase 1 (431 aa).

An N6-(pyridoxal phosphate)lysine modification is found at lysine 268.

It belongs to the class-III pyridoxal-phosphate-dependent aminotransferase family. HemL subfamily. As to quaternary structure, homodimer. Requires pyridoxal 5'-phosphate as cofactor.

It is found in the cytoplasm. It carries out the reaction (S)-4-amino-5-oxopentanoate = 5-aminolevulinate. Its pathway is porphyrin-containing compound metabolism; protoporphyrin-IX biosynthesis; 5-aminolevulinate from L-glutamyl-tRNA(Glu): step 2/2. This Anoxybacillus flavithermus (strain DSM 21510 / WK1) protein is Glutamate-1-semialdehyde 2,1-aminomutase 1.